Consider the following 420-residue polypeptide: Putative RNA-binding protein Alsin2 (420 aa).

A coiled-coil region spans residues 99–130 (IADCDRRTDSAKQRLKETQEELTAEVAEKANA). Basic and acidic residues-rich tracts occupy residues 242–259 (AELK…EGRG), 282–363 (RERQ…RFGD), and 373–399 (HHRD…HFRD). The interval 242–420 (AELKRTGKMT…SYSRERNYRR (179 aa)) is disordered.

It belongs to the Luc7 family. Interacts with x16 (via Arg/Ser-rich region).

In terms of biological role, may bind to RNA via its Arg/Ser-rich domain. The chain is Putative RNA-binding protein Alsin2 from Drosophila melanogaster (Fruit fly).